We begin with the raw amino-acid sequence, 133 residues long: Small ribosomal subunit protein uS11 (133 aa).

This sequence belongs to the universal ribosomal protein uS11 family. As to quaternary structure, part of the 30S ribosomal subunit. Interacts with proteins S7 and S18. Binds to IF-3.

Functionally, located on the platform of the 30S subunit, it bridges several disparate RNA helices of the 16S rRNA. Forms part of the Shine-Dalgarno cleft in the 70S ribosome. This Burkholderia pseudomallei (strain 1106a) protein is Small ribosomal subunit protein uS11.